The primary structure comprises 430 residues: Zinc finger and SCAN domain-containing protein 4 (430 aa).

Residues 1–38 (MASDLRISFQGEPSRNDPGSENLEHKPSQGPAVQEEEE) form a disordered region. Residues 44-126 (RTQLSLLQNS…KFMEDLTDES (83 aa)) form the SCAN box domain. Polar residues predominate over residues 164–185 (GSPTGTDMETPSWTPQDTSLET). 3 disordered regions span residues 164-196 (GSPT…KENG), 224-257 (YPRP…SLKG), and 281-300 (EPVP…GHQE). C2H2-type zinc fingers lie at residues 309–331 (YRCE…QRRH), 337–359 (FTCA…QKIH), 365–387 (FTCS…ERIH), and 393–415 (YECS…LRNH).

It is found in the nucleus. The protein resides in the chromosome. It localises to the telomere. In terms of biological role, embryonic stem (ES) cell-specific transcription factor required to regulate ES cell pluripotency. Binds telomeres and plays a key role in genomic stability in ES cells by regulating telomere elongation. Acts as an activator of spontaneous telomere sister chromatid exchange (T-SCE) and telomere elongation in undifferentiated ES cells. In Ailuropoda melanoleuca (Giant panda), this protein is Zinc finger and SCAN domain-containing protein 4 (ZSCAN4).